The following is a 627-amino-acid chain: Altered inheritance of mitochondria protein 9, mitochondrial (627 aa).

A mitochondrion-targeting transit peptide spans 1 to 43 (MIRYTVAGHSRRCVVGASKRVGAIKCITVAATKRFISNKPNEV).

It belongs to the AIM9 family.

Its subcellular location is the mitochondrion. In Saccharomyces cerevisiae (strain ATCC 204508 / S288c) (Baker's yeast), this protein is Altered inheritance of mitochondria protein 9, mitochondrial (AIM9).